The chain runs to 597 residues: K(+) efflux antiporter 6 (597 aa).

The first 35 residues, 1-35 (MVEGRRRRRFSLSSQQLALLLLLLSFFLCFSVASP), serve as a signal peptide directing secretion. A run of 12 helical transmembrane segments spans residues 177–197 (LISD…AFAC), 201–221 (PVIT…LNFI), 224–244 (MVQV…ALGL), 257–277 (VAVL…GITV), 287–307 (GVFV…KFLM), 321–341 (IGIL…LPVL), 351–371 (MLSI…LSIL), 396–416 (LAAV…GLSL), 440–460 (IEPI…MLVN), 461–481 (VHFL…VIII), 499–519 (TALL…VLLS), and 543–563 (LVTT…GILL).

The protein belongs to the monovalent cation:proton antiporter 2 (CPA2) transporter (TC 2.A.37) family. KEA (TC 2.A.37.1) subfamily. Expressed in roots, stems, leaves, flowers and silique.

The protein localises to the golgi apparatus membrane. It is found in the golgi apparatus. It localises to the trans-Golgi network membrane. The protein resides in the prevacuolar compartment membrane. Its subcellular location is the endomembrane system. It catalyses the reaction K(+)(in) + H(+)(out) = K(+)(out) + H(+)(in). Functionally, electroneutral K(+)/H(+) efflux antiporter involved in K(+) homeostasis and osmotic adjustment. Together with KEA4 and KEA5, promotes growth and development, and facilitates endosomal pH and ions homeostasis, as well as salt tolerance (e.g. K(+), NaCl and LiCl), probably by supporting cell wall biosynthesis during rapid etiolated seedling growth. The sequence is that of K(+) efflux antiporter 6 from Arabidopsis thaliana (Mouse-ear cress).